Here is a 141-residue protein sequence, read N- to C-terminus: MSASVSSKSTVVSSIISGLLSIVLFGTLRFCSEWFNDSQLRVLLGGYLFSWVFILSLTCVSNAEMVVFGQDFQAKLLPEIIFCLSLTVAAAGLVHRVCATTSVLFSLVGLYFLNRISTKYYSVQVPSVDAPTTRKGGKKFK.

A run of 4 helical transmembrane segments spans residues Val-11–Cys-31, Val-42–Asn-62, Ala-74–Val-94, and Val-97–Ser-117.

This sequence belongs to the KRTCAP2 family. As to quaternary structure, component of the oligosaccharyltransferase (OST) complex.

The protein localises to the membrane. Its function is as follows. Subunit of the oligosaccharyl transferase (OST) complex that catalyzes the initial transfer of a defined glycan (Glc(3)Man(9)GlcNAc(2) in eukaryotes) from the lipid carrier dolichol-pyrophosphate to an asparagine residue within an Asn-X-Ser/Thr consensus motif in nascent polypeptide chains, the first step in protein N-glycosylation. N-glycosylation occurs cotranslationally and the complex associates with the Sec61 complex at the channel-forming translocon complex that mediates protein translocation across the endoplasmic reticulum (ER). All subunits are required for a maximal enzyme activity. The sequence is that of Protein KRTCAP2 homolog from Drosophila melanogaster (Fruit fly).